A 470-amino-acid chain; its full sequence is Glycine--tRNA ligase (470 aa).

Substrate is bound by residues arginine 94 and glutamate 183. Residues 215–217 (RNE), 225–230 (FRMVEF), 298–299 (EI), and 342–345 (GCDR) contribute to the ATP site. Residue 230–234 (FEQME) participates in substrate binding. Residue 338–342 (ETSSG) participates in substrate binding.

Belongs to the class-II aminoacyl-tRNA synthetase family. As to quaternary structure, homodimer.

Its subcellular location is the cytoplasm. The enzyme catalyses tRNA(Gly) + glycine + ATP = glycyl-tRNA(Gly) + AMP + diphosphate. Functionally, catalyzes the attachment of glycine to tRNA(Gly). The chain is Glycine--tRNA ligase from Chlorobaculum tepidum (strain ATCC 49652 / DSM 12025 / NBRC 103806 / TLS) (Chlorobium tepidum).